Consider the following 287-residue polypeptide: NAD kinase (287 aa).

Aspartate 66 serves as the catalytic Proton acceptor. NAD(+)-binding positions include 66 to 67 (DG), 137 to 138 (ND), arginine 148, arginine 165, aspartate 167, and 178 to 183 (TAYSMS).

Belongs to the NAD kinase family. A divalent metal cation is required as a cofactor.

It localises to the cytoplasm. The enzyme catalyses NAD(+) + ATP = ADP + NADP(+) + H(+). Involved in the regulation of the intracellular balance of NAD and NADP, and is a key enzyme in the biosynthesis of NADP. Catalyzes specifically the phosphorylation on 2'-hydroxyl of the adenosine moiety of NAD to yield NADP. This is NAD kinase from Chlorobium limicola (strain DSM 245 / NBRC 103803 / 6330).